Reading from the N-terminus, the 307-residue chain is NAD kinase 1 (307 aa).

Aspartate 67 (proton acceptor) is an active-site residue. NAD(+) is bound by residues 67-68, 149-150, arginine 179, and aspartate 181; these read DG and ND.

It belongs to the NAD kinase family. The cofactor is a divalent metal cation.

Its subcellular location is the cytoplasm. It carries out the reaction NAD(+) + ATP = ADP + NADP(+) + H(+). Its function is as follows. Involved in the regulation of the intracellular balance of NAD and NADP, and is a key enzyme in the biosynthesis of NADP. Catalyzes specifically the phosphorylation on 2'-hydroxyl of the adenosine moiety of NAD to yield NADP. This Prochlorococcus marinus (strain SARG / CCMP1375 / SS120) protein is NAD kinase 1.